The sequence spans 639 residues: ATP-dependent zinc metalloprotease FtsH (639 aa).

At 1 to 4 the chain is on the cytoplasmic side; the sequence is MNST. Residues 5-25 form a helical membrane-spanning segment; sequence VKTIVFWVFILACCILLWQVF. At 26 to 104 the chain is on the periplasmic side; that stretch reads QRSSNTGKEQ…TVKDNSGSPW (79 aa). The helical transmembrane segment at 105-125 threads the bilayer; sequence WSILIQFSPVLVLVALWFFMI. Over 126–639 the chain is Cytoplasmic; that stretch reads RQMQSGGNKA…GLPEGSPSPA (514 aa). An ATP-binding site is contributed by 196–203; the sequence is GPPGTGKT. Histidine 418 contacts Zn(2+). The active site involves glutamate 419. The Zn(2+) site is built by histidine 422 and aspartate 494. Residues 597-639 are disordered; that stretch reads KDLPPLKPSGGSGTATTDDVQQVLKPSSDRGAGGLPEGSPSPA.

In the central section; belongs to the AAA ATPase family. It in the C-terminal section; belongs to the peptidase M41 family. As to quaternary structure, homohexamer. Zn(2+) serves as cofactor.

It is found in the cell inner membrane. Its function is as follows. Acts as a processive, ATP-dependent zinc metallopeptidase for both cytoplasmic and membrane proteins. Plays a role in the quality control of integral membrane proteins. This chain is ATP-dependent zinc metalloprotease FtsH, found in Acidobacterium capsulatum (strain ATCC 51196 / DSM 11244 / BCRC 80197 / JCM 7670 / NBRC 15755 / NCIMB 13165 / 161).